The chain runs to 119 residues: Dihydroneopterin aldolase (119 aa).

Residues glutamate 21, tyrosine 53, and isoleucine 72–glutamate 73 contribute to the substrate site. The Proton donor/acceptor role is filled by lysine 99.

It belongs to the DHNA family.

It carries out the reaction 7,8-dihydroneopterin = 6-hydroxymethyl-7,8-dihydropterin + glycolaldehyde. Its pathway is cofactor biosynthesis; tetrahydrofolate biosynthesis; 2-amino-4-hydroxy-6-hydroxymethyl-7,8-dihydropteridine diphosphate from 7,8-dihydroneopterin triphosphate: step 3/4. Functionally, catalyzes the conversion of 7,8-dihydroneopterin to 6-hydroxymethyl-7,8-dihydropterin. In Streptococcus pyogenes serotype M3 (strain ATCC BAA-595 / MGAS315), this protein is Dihydroneopterin aldolase (folB).